Here is a 215-residue protein sequence, read N- to C-terminus: Flagellin B1 (215 aa).

The propeptide occupies 1-12; the sequence is MSVKNFMNNKKG.

It belongs to the archaeal flagellin family.

The protein resides in the archaeal flagellum. In terms of biological role, flagellin is the subunit protein which polymerizes to form the filaments of archaeal flagella. The protein is Flagellin B1 (flaB1) of Methanococcus vannielii (strain ATCC 35089 / DSM 1224 / JCM 13029 / OCM 148 / SB).